The following is a 619-amino-acid chain: MADEKRPASRAWLGYLLIAVGILVLSGIVRSRGRPLVPYDEAVAEVRRGEISAAIVKPDEIELVRRESPQRPEERVRVTRLPGVEDEPLVRALLDKQVRIEAKSPQTSVWMQVAIWMLPLVLINAAFFMMLRRAGQGAGGPLGFLRSKAKIYDRSRQDPVRFSDVAGVDEAKDELVEVVDFLKEPSRYRSLGGRIPRGLLLIGPPGTGKTLLARAVAGEANVPFFSLNASEFVEMFVGLGAARVRELFEEARKSAPSIVFIDEIDAVGRTRGGLGALATHDEREQTLHQLLAELDGFDARTTVILMAATNRPEVLDPALLRPGRFDRQVIVDRPDLRGREAILAVHARRVPLASGVDLGLVARRTPGMVGADLAKIVNEAALAGARRGAREIGQADFDEALDRSQLGLRRRGQIMTAEERRRVAYHEAGHALVALALPAADPVERVSIVARTIGALGVTIQVPRDERQLVTEQEIESRVTVMLGGRAAEELALGQVSSGAHDDLGRATALVREMVTRLGMSRRLGLAALARTVGAPMLGVLQEERTCSEATAREVDEEVRERLGEMYLKAKQLLVDRREGLEAVAEALVLKETLRGEELEEIAAVSTRRKIAVGPPSAA.

Topologically, residues 1–8 (MADEKRPA) are cytoplasmic. Residues 9–29 (SRAWLGYLLIAVGILVLSGIV) form a helical membrane-spanning segment. Residues 30-108 (RSRGRPLVPY…RIEAKSPQTS (79 aa)) lie on the Periplasmic side of the membrane. A helical membrane pass occupies residues 109-129 (VWMQVAIWMLPLVLINAAFFM). The Cytoplasmic portion of the chain corresponds to 130-619 (MLRRAGQGAG…KIAVGPPSAA (490 aa)). 203–210 (GPPGTGKT) is a binding site for ATP. His-426 is a binding site for Zn(2+). Glu-427 is a catalytic residue. Zn(2+) contacts are provided by His-430 and Asp-503.

In the central section; belongs to the AAA ATPase family. The protein in the C-terminal section; belongs to the peptidase M41 family. In terms of assembly, homohexamer. It depends on Zn(2+) as a cofactor.

The protein resides in the cell inner membrane. In terms of biological role, acts as a processive, ATP-dependent zinc metallopeptidase for both cytoplasmic and membrane proteins. Plays a role in the quality control of integral membrane proteins. The polypeptide is ATP-dependent zinc metalloprotease FtsH 1 (Sorangium cellulosum (strain So ce56) (Polyangium cellulosum (strain So ce56))).